The chain runs to 469 residues: Cell division protein FtsP (469 aa).

Residues 1 to 27 (MKLSRRQFLQRSTLAGVATVTPTSLWA) constitute a signal peptide (tat-type signal).

This sequence belongs to the FtsP family. Post-translationally, predicted to be exported by the Tat system. The position of the signal peptide cleavage has not been experimentally proven.

The protein resides in the periplasm. Cell division protein that is required for growth during stress conditions. May be involved in protecting or stabilizing the divisomal assembly under conditions of stress. The sequence is that of Cell division protein FtsP from Glaesserella parasuis serovar 5 (strain SH0165) (Haemophilus parasuis).